The primary structure comprises 197 residues: Small ribosomal subunit protein uS5 (197 aa).

Residues 1-17 (MAERENRGRGRGRNREE) show a composition bias toward basic and acidic residues. 2 disordered regions span residues 1 to 22 (MAER…TPEF) and 158 to 197 (NESS…SEEA). The S5 DRBM domain maps to 22 to 85 (FADRLVAINR…EQAKRQLIRV (64 aa)). A compositionally biased stretch (basic and acidic residues) spans 172–186 (KVADILPKRDDHPQI).

Belongs to the universal ribosomal protein uS5 family. In terms of assembly, part of the 30S ribosomal subunit. Contacts proteins S4 and S8.

In terms of biological role, with S4 and S12 plays an important role in translational accuracy. Located at the back of the 30S subunit body where it stabilizes the conformation of the head with respect to the body. The protein is Small ribosomal subunit protein uS5 of Jannaschia sp. (strain CCS1).